The chain runs to 346 residues: Probable dual-specificity RNA methyltransferase RlmN (346 aa).

E90 serves as the catalytic Proton acceptor. A Radical SAM core domain is found at 96–330 (TRDRLTVCVS…VSVRASRGLD (235 aa)). The cysteines at positions 103 and 335 are disulfide-linked. [4Fe-4S] cluster-binding residues include C110, C114, and C117. S-adenosyl-L-methionine is bound by residues 157 to 158 (GE), S187, 216 to 218 (SLH), and N292. C335 serves as the catalytic S-methylcysteine intermediate.

It belongs to the radical SAM superfamily. RlmN family. [4Fe-4S] cluster serves as cofactor.

It is found in the cytoplasm. It catalyses the reaction adenosine(2503) in 23S rRNA + 2 reduced [2Fe-2S]-[ferredoxin] + 2 S-adenosyl-L-methionine = 2-methyladenosine(2503) in 23S rRNA + 5'-deoxyadenosine + L-methionine + 2 oxidized [2Fe-2S]-[ferredoxin] + S-adenosyl-L-homocysteine. It carries out the reaction adenosine(37) in tRNA + 2 reduced [2Fe-2S]-[ferredoxin] + 2 S-adenosyl-L-methionine = 2-methyladenosine(37) in tRNA + 5'-deoxyadenosine + L-methionine + 2 oxidized [2Fe-2S]-[ferredoxin] + S-adenosyl-L-homocysteine. Functionally, specifically methylates position 2 of adenine 2503 in 23S rRNA and position 2 of adenine 37 in tRNAs. The protein is Probable dual-specificity RNA methyltransferase RlmN of Synechococcus sp. (strain RCC307).